A 147-amino-acid polypeptide reads, in one-letter code: MPLYEHVFLARQDASSQQVEELTNQITGVITGLGGKVTKTENWGVRSLTYRMKKNRKAHFVLLNIDGPAAVVSEIERQERIHEDVIRYLSIRVEEHEEGPSAMMRKADRDRERDDRGGGFRGDREGGFRGDRGPRRPREEAPAVVEE.

Residues glutamate 97 to alanine 141 are compositionally biased toward basic and acidic residues. The segment at glutamate 97–glutamate 147 is disordered.

Belongs to the bacterial ribosomal protein bS6 family.

Functionally, binds together with bS18 to 16S ribosomal RNA. This is Small ribosomal subunit protein bS6 from Nitrobacter hamburgensis (strain DSM 10229 / NCIMB 13809 / X14).